The primary structure comprises 340 residues: Speriolin-like protein (340 aa).

Disordered regions lie at residues glycine 42–serine 73 and alanine 94–proline 135. Serine 60 is modified (phosphoserine). Residues proline 123–leucine 133 show a composition bias toward basic and acidic residues. Phosphoserine is present on serine 134.

The protein belongs to the speriolin family.

It localises to the cytoplasm. This is Speriolin-like protein (SPATC1L) from Homo sapiens (Human).